We begin with the raw amino-acid sequence, 222 residues long: Adapter protein MecA (222 aa).

The protein belongs to the MecA family. As to quaternary structure, homodimer.

Functionally, enables the recognition and targeting of unfolded and aggregated proteins to the ClpC protease or to other proteins involved in proteolysis. This chain is Adapter protein MecA, found in Lysinibacillus sphaericus (strain C3-41).